The following is a 287-amino-acid chain: Putative B3 domain-containing protein Os08g0157700 (287 aa).

The segment covering 17–29 (ATEEEEEEEEEEQ) has biased composition (acidic residues). A disordered region spans residues 17-36 (ATEEEEEEEEEEQALGQEPA). The TF-B3 DNA-binding region spans 71 to 168 (FDKVVTPSDV…RYFIDYRHCH (98 aa)).

It localises to the nucleus. The protein is Putative B3 domain-containing protein Os08g0157700 of Oryza sativa subsp. japonica (Rice).